The chain runs to 261 residues: Cytochrome c oxidase subunit 3 (261 aa).

Topologically, residues 1 to 15 (MTHQTHAYHMVNPSP) are mitochondrial matrix. A helical transmembrane segment spans residues 16-34 (WPLTGALSALLMTSGLAMW). Residues 35–40 (FHFNSV) are Mitochondrial intermembrane-facing. Residues 41–66 (TLLTLGLTTNMLTMYQWWRDIIREST) traverse the membrane as a helical segment. Over 67–72 (FQGHHT) the chain is Mitochondrial matrix. Residues 73-105 (PTVQKGLRYGMILFIISEVLFFTGFFWAFYHSS) form a helical membrane-spanning segment. Residues 106–128 (LAPTPELGGCWPPTGISPLNPLE) lie on the Mitochondrial intermembrane side of the membrane. The helical transmembrane segment at 129–152 (VPLLNTSVLLASGVSITWAHHSLM) threads the bilayer. Residues 153 to 155 (EGN) lie on the Mitochondrial matrix side of the membrane. A helical transmembrane segment spans residues 156-183 (RNHMLQALFITIALGVYFTLLQASEYYE). The Mitochondrial intermembrane portion of the chain corresponds to 184 to 190 (APFTISD). The helical transmembrane segment at 191 to 223 (GIYGSTFFVATGFHGLHVIIGSTFLIVCFFRQL) threads the bilayer. The Mitochondrial matrix segment spans residues 224-232 (KFHFTSNHH). Residues 233–256 (FGFEAAAWYWHFVDVVWLFLYVSI) traverse the membrane as a helical segment. At 257-261 (YWWGS) the chain is on the mitochondrial intermembrane side.

Belongs to the cytochrome c oxidase subunit 3 family. Component of the cytochrome c oxidase (complex IV, CIV), a multisubunit enzyme composed of 14 subunits. The complex is composed of a catalytic core of 3 subunits MT-CO1, MT-CO2 and MT-CO3, encoded in the mitochondrial DNA, and 11 supernumerary subunits COX4I, COX5A, COX5B, COX6A, COX6B, COX6C, COX7A, COX7B, COX7C, COX8 and NDUFA4, which are encoded in the nuclear genome. The complex exists as a monomer or a dimer and forms supercomplexes (SCs) in the inner mitochondrial membrane with NADH-ubiquinone oxidoreductase (complex I, CI) and ubiquinol-cytochrome c oxidoreductase (cytochrome b-c1 complex, complex III, CIII), resulting in different assemblies (supercomplex SCI(1)III(2)IV(1) and megacomplex MCI(2)III(2)IV(2)).

The protein localises to the mitochondrion inner membrane. The enzyme catalyses 4 Fe(II)-[cytochrome c] + O2 + 8 H(+)(in) = 4 Fe(III)-[cytochrome c] + 2 H2O + 4 H(+)(out). Component of the cytochrome c oxidase, the last enzyme in the mitochondrial electron transport chain which drives oxidative phosphorylation. The respiratory chain contains 3 multisubunit complexes succinate dehydrogenase (complex II, CII), ubiquinol-cytochrome c oxidoreductase (cytochrome b-c1 complex, complex III, CIII) and cytochrome c oxidase (complex IV, CIV), that cooperate to transfer electrons derived from NADH and succinate to molecular oxygen, creating an electrochemical gradient over the inner membrane that drives transmembrane transport and the ATP synthase. Cytochrome c oxidase is the component of the respiratory chain that catalyzes the reduction of oxygen to water. Electrons originating from reduced cytochrome c in the intermembrane space (IMS) are transferred via the dinuclear copper A center (CU(A)) of subunit 2 and heme A of subunit 1 to the active site in subunit 1, a binuclear center (BNC) formed by heme A3 and copper B (CU(B)). The BNC reduces molecular oxygen to 2 water molecules using 4 electrons from cytochrome c in the IMS and 4 protons from the mitochondrial matrix. In Neotragus moschatus (Suni), this protein is Cytochrome c oxidase subunit 3 (MT-CO3).